Consider the following 176-residue polypeptide: MSKRAVIRFLGVAGLVLSGATVMGLIGGYRVNVTPSEPLGLWRVEKLRRPVQSGDLVFVCPPHNAFFEEAWLRGYLRSGLCPGWFAPLIKSVLALPGQRVEIADRIVIDGHPVSASTVSATDSEGRAIAPFAGGVVPPGFLFLHSSFASSYDSRYFGPIPDSGLLGLARPVFTFDP.

Residues 1–24 (MSKRAVIRFLGVAGLVLSGATVMG) form the signal peptide.

Belongs to the peptidase S26C family.

The protein localises to the periplasm. In terms of biological role, involved in conjugal transfer of the plasmid. The sequence is that of Conjugal transfer protein TraF (traF) from Agrobacterium fabrum (strain C58 / ATCC 33970) (Agrobacterium tumefaciens (strain C58)).